The sequence spans 225 residues: Protein-L-isoaspartate O-methyltransferase (225 aa).

Serine 75 is an active-site residue.

This sequence belongs to the methyltransferase superfamily. L-isoaspartyl/D-aspartyl protein methyltransferase family.

Its subcellular location is the cytoplasm. It carries out the reaction [protein]-L-isoaspartate + S-adenosyl-L-methionine = [protein]-L-isoaspartate alpha-methyl ester + S-adenosyl-L-homocysteine. Its function is as follows. Catalyzes the methyl esterification of L-isoaspartyl residues in peptides and proteins that result from spontaneous decomposition of normal L-aspartyl and L-asparaginyl residues. It plays a role in the repair and/or degradation of damaged proteins. This chain is Protein-L-isoaspartate O-methyltransferase, found in Stenotrophomonas maltophilia (strain R551-3).